The following is a 35-amino-acid chain: Photosystem II reaction center protein T (35 aa).

Residues 3–23 (ALVYTFLLVSTLGIIFFAIFF) traverse the membrane as a helical segment.

The protein belongs to the PsbT family. PSII is composed of 1 copy each of membrane proteins PsbA, PsbB, PsbC, PsbD, PsbE, PsbF, PsbH, PsbI, PsbJ, PsbK, PsbL, PsbM, PsbT, PsbY, PsbZ, Psb30/Ycf12, at least 3 peripheral proteins of the oxygen-evolving complex and a large number of cofactors. It forms dimeric complexes.

It localises to the plastid. It is found in the chloroplast thylakoid membrane. In terms of biological role, found at the monomer-monomer interface of the photosystem II (PS II) dimer, plays a role in assembly and dimerization of PSII. PSII is a light-driven water plastoquinone oxidoreductase, using light energy to abstract electrons from H(2)O, generating a proton gradient subsequently used for ATP formation. This chain is Photosystem II reaction center protein T, found in Amborella trichopoda.